The primary structure comprises 486 residues: Ribulose bisphosphate carboxylase large chain, chromosomal (486 aa).

Substrate is bound by residues Asn-126 and Thr-176. The active-site Proton acceptor is the Lys-178. Lys-180 provides a ligand contact to substrate. Residues Lys-204, Asp-206, and Glu-207 each coordinate Mg(2+). Lys-204 carries the N6-carboxylysine modification. His-296 acts as the Proton acceptor in catalysis. Arg-297, His-329, and Ser-381 together coordinate substrate.

Belongs to the RuBisCO large chain family. Type I subfamily. As to quaternary structure, heterohexadecamer of 8 large chains and 8 small chains; disulfide-linked. The disulfide link is formed within the large subunit homodimers. The cofactor is Mg(2+). The disulfide bond which can form between Cys-278 in the large chain dimeric partners within the hexadecamer appears to be associated with oxidative stress and protein turnover.

The catalysed reaction is 2 (2R)-3-phosphoglycerate + 2 H(+) = D-ribulose 1,5-bisphosphate + CO2 + H2O. The enzyme catalyses D-ribulose 1,5-bisphosphate + O2 = 2-phosphoglycolate + (2R)-3-phosphoglycerate + 2 H(+). RuBisCO catalyzes two reactions: the carboxylation of D-ribulose 1,5-bisphosphate, the primary event in carbon dioxide fixation, as well as the oxidative fragmentation of the pentose substrate. Both reactions occur simultaneously and in competition at the same active site. The polypeptide is Ribulose bisphosphate carboxylase large chain, chromosomal (cbbL1) (Cupriavidus necator (strain ATCC 17699 / DSM 428 / KCTC 22496 / NCIMB 10442 / H16 / Stanier 337) (Ralstonia eutropha)).